The primary structure comprises 276 residues: Large ribosomal subunit protein uL2 (276 aa).

The segment at 225 to 276 is disordered; sequence MNPVDHPHGGGEGRAPVGRKHPVTPWGKPAMGAKTRKKRKLSDKLIVKPRNK. Over residues 258 to 276 the composition is skewed to basic residues; the sequence is KTRKKRKLSDKLIVKPRNK.

The protein belongs to the universal ribosomal protein uL2 family. In terms of assembly, part of the 50S ribosomal subunit. Forms a bridge to the 30S subunit in the 70S ribosome.

In terms of biological role, one of the primary rRNA binding proteins. Required for association of the 30S and 50S subunits to form the 70S ribosome, for tRNA binding and peptide bond formation. It has been suggested to have peptidyltransferase activity; this is somewhat controversial. Makes several contacts with the 16S rRNA in the 70S ribosome. The polypeptide is Large ribosomal subunit protein uL2 (Moorella thermoacetica (strain ATCC 39073 / JCM 9320)).